A 117-amino-acid chain; its full sequence is Eukaryotic translation initiation factor 4E-binding protein 1 (117 aa).

Polar residues-rich tracts occupy residues 1-12 (MSAGSSCSQTPS) and 33-47 (YSTT…TTPG). The tract at residues 1 to 47 (MSAGSSCSQTPSRAIPTRRVALGDGVQLPPGDYSTTPGGTLFSTTPG) is disordered. Residue S2 is modified to N-acetylserine. T36 and T40 each carry phosphothreonine. At S43 the chain carries Phosphoserine. Residue T45 is modified to Phosphothreonine; by MTOR. Phosphothreonine is present on T49. Phosphotyrosine is present on Y53. Positions 53 to 59 (YDRKFLM) match the YXXXXLphi motif motif. K56 is covalently cross-linked (Glycyl lysine isopeptide (Lys-Gly) (interchain with G-Cter in ubiquitin)). Position 64 is a phosphoserine; by DYRK2, MAPK1, MAPK3 and MTOR (S64). A disordered region spans residues 64-117 (SPVAKTPPKDLPTIPGVTSPTSDEPPMQASQSHLHSSPEDKRAGGEESQFEMDI). At T69 the chain carries Phosphothreonine; by MTOR. A Phosphothreonine modification is found at T76. Residues 79–98 (GVTSPTSDEPPMQASQSHLH) show a composition bias toward polar residues. Phosphoserine occurs at positions 82, 95, and 99. The segment covering 99–108 (SSPEDKRAGG) has biased composition (basic and acidic residues). A Phosphoserine; by DYRK2 modification is found at S100. Phosphoserine is present on S111. Positions 113–117 (FEMDI) match the TOS motif motif.

It belongs to the eIF4E-binding protein family. As to quaternary structure, hypophosphorylated EIF4EBP1 competes with EIF4G1/EIF4G3 to interact with EIF4E; insulin stimulated MAP-kinase (MAPK1 and MAPK3) or mTORC1 phosphorylation of EIF4EBP1 causes dissociation of the complex allowing EIF4G1/EIF4G3 to bind and consequent initiation of translation. Interacts (via TOS motif) with RPTOR; promoting phosphorylation by mTORC1. In terms of processing, phosphorylated on serine and threonine residues in response to insulin, EGF and PDGF. Phosphorylation at Thr-36, Thr-45, Ser-64 and Thr-69, corresponding to the hyperphosphorylated form, is regulated by mTORC1 and abolishes binding to EIF4E. Post-translationally, ubiquitinated: when eIF4E levels are low, hypophosphorylated form is ubiquitinated by the BCR(KLHL25) complex, leading to its degradation and serving as a homeostatic mechanism to maintain translation and prevent eIF4E inhibition when eIF4E levels are low. Not ubiquitinated when hyperphosphorylated (at Thr-36, Thr-45, Ser-64 and Thr-69) or associated with eIF4E. As to expression, expressed in all tissues examined; highest levels in fat and skeletal tissue, lowest levels in kidney.

It is found in the cytoplasm. The protein localises to the nucleus. Repressor of translation initiation that regulates EIF4E activity by preventing its assembly into the eIF4F complex: hypophosphorylated form competes with EIF4G1/EIF4G3 and strongly binds to EIF4E, leading to repress translation. In contrast, hyperphosphorylated form dissociates from EIF4E, allowing interaction between EIF4G1/EIF4G3 and EIF4E, leading to initiation of translation. Mediates the regulation of protein translation by hormones, growth factors and other stimuli that signal through the MAP kinase and mTORC1 pathways. This Rattus norvegicus (Rat) protein is Eukaryotic translation initiation factor 4E-binding protein 1 (Eif4ebp1).